The following is a 231-amino-acid chain: Flagellar L-ring protein (231 aa).

The first 18 residues, methionine 1–glycine 18, serve as a signal peptide directing secretion. Cysteine 19 carries N-palmitoyl cysteine lipidation. The S-diacylglycerol cysteine moiety is linked to residue cysteine 19. A disordered region spans residues leucine 118–serine 141.

This sequence belongs to the FlgH family. As to quaternary structure, the basal body constitutes a major portion of the flagellar organelle and consists of four rings (L,P,S, and M) mounted on a central rod.

It is found in the cell outer membrane. Its subcellular location is the bacterial flagellum basal body. Assembles around the rod to form the L-ring and probably protects the motor/basal body from shearing forces during rotation. The chain is Flagellar L-ring protein from Pseudomonas paraeruginosa (strain DSM 24068 / PA7) (Pseudomonas aeruginosa (strain PA7)).